A 511-amino-acid polypeptide reads, in one-letter code: Synaptotagmin-6 (511 aa).

The Vesicular portion of the chain corresponds to 1–59 (MSGVWGAGGPRCQAALAVLASLCRARPPPLGLDVETCQSFELQPPEQSPSAADSGTSVS). The segment at 12-38 (CQAALAVLASLCRARPPPLGLDVETCQ) is cysteine motif. A helical membrane pass occupies residues 60–80 (LLAVVVIVCGVALVAVFFFLF). Topologically, residues 81-511 (WKLCWMPWRN…KSFKEGTPRL (431 aa)) are cytoplasmic. Positions 93–103 (ASSPSSANPAS) are enriched in low complexity. Disordered stretches follow at residues 93 to 118 (ASSPSSANPASEILQSPSSRGNMADK) and 157 to 182 (TKLQRQTTEPASSTRHTSFKRHLPRQ). Residues 160 to 172 (QRQTTEPASSTRH) are compositionally biased toward polar residues. At S217 the chain carries Phosphoserine. C2 domains follow at residues 230-351 (SCGK…SIWK) and 362-495 (DLGE…AHWH). Ca(2+)-binding residues include D261, D267, D319, F320, D321, S324, D327, D393, D399, D453, and D455. The segment at 483–511 (MLAYPRKPIAHWHCLAEVKKSFKEGTPRL) is necessary for cell membrane association (isoform 2).

Belongs to the synaptotagmin family. Isoform 1: Homodimer; disulfide-linked via the cysteine motif. Isoform 1: Can also form heterodimers with SYT3, SYT7, SYT9 and SYT10. Isoform 1: Interacts with STX1A, STX1B and STX2; the interaction is Ca(2+)-dependent. Isoform 2: Is not able to form homodimer and heterodimers. Ca(2+) is required as a cofactor.

It localises to the cytoplasmic vesicle. It is found in the secretory vesicle. The protein resides in the synaptic vesicle membrane. Its subcellular location is the membrane. The protein localises to the cytoplasm. It localises to the cytosol. It is found in the cell membrane. Its function is as follows. May be involved in Ca(2+)-dependent exocytosis of secretory vesicles through Ca(2+) and phospholipid binding to the C2 domain or may serve as Ca(2+) sensors in the process of vesicular trafficking and exocytosis. May mediate Ca(2+)-regulation of exocytosis in acrosomal reaction in sperm. This is Synaptotagmin-6 (Syt6) from Rattus norvegicus (Rat).